The primary structure comprises 234 residues: GTP-binding protein ypt4 (234 aa).

16-23 (GPSGTGKS) serves as a coordination point for GTP. Residues 39-47 (SHTVGIDFA) carry the Effector region motif. A GTP-binding site is contributed by 68 to 72 (DTAGQ). Residues C233 and C234 are each lipidated (S-geranylgeranyl cysteine).

This sequence belongs to the small GTPase superfamily. Rab family.

It is found in the cell membrane. This chain is GTP-binding protein ypt4 (ypt4), found in Schizosaccharomyces pombe (strain 972 / ATCC 24843) (Fission yeast).